The following is a 373-amino-acid chain: STE20-related kinase adapter protein alpha (373 aa).

Residues tyrosine 11–phenylalanine 321 form the Protein kinase domain. The segment covering serine 255–serine 281 has biased composition (polar residues). The tract at residues serine 255–arginine 288 is disordered. Threonine 361 is modified (phosphothreonine; by LKB1).

It belongs to the protein kinase superfamily. STE Ser/Thr protein kinase family. STE20 subfamily. In terms of assembly, component of a trimeric complex composed of STK11/LKB1, STRAD (STRADA or STRADB) and CAB39/MO25 (CAB39/MO25alpha or CAB39L/MO25beta): the complex tethers STK11/LKB1 in the cytoplasm and stimulates its catalytic activity.

The protein resides in the nucleus. It is found in the cytoplasm. In terms of biological role, pseudokinase which, in complex with CAB39/MO25 (CAB39/MO25alpha or CAB39L/MO25beta), binds to and activates STK11/LKB1. Adopts a closed conformation typical of active protein kinases and binds STK11/LKB1 as a pseudosubstrate, promoting conformational change of STK11/LKB1 in an active conformation. This Bos taurus (Bovine) protein is STE20-related kinase adapter protein alpha (STRADA).